A 739-amino-acid polypeptide reads, in one-letter code: Prestin (739 aa).

Residues 1-76 (MEHVTVSEEP…PILTWLPSYP (76 aa)) lie on the Cytoplasmic side of the membrane. A helical transmembrane segment spans residues 77–106 (LKEYLFGDIVSGISTGVMQLPQGLAYAMLA). The Extracellular portion of the chain corresponds to 107 to 109 (AVP). The chain crosses the membrane as a helical span at residues 110–127 (PVFGLYSSFYPVLLYTFF). At 128 to 138 (GTSKHISIGTF) the chain is on the cytoplasmic side. The helical transmembrane segment at 139–152 (AVISLMIGGVAVRE) threads the bilayer. Residues 153 to 169 (APDSMFMVNGTNSSLVV) are Extracellular-facing. N-linked (GlcNAc...) asparagine glycosylation is found at asparagine 161 and asparagine 164. The helical transmembrane segment at 170–199 (NIEARDSRRVEVVVALTTLVGIIQFVLGLL) threads the bilayer. Residues 200 to 209 (RFGFLAIYLT) are Cytoplasmic-facing. The helical transmembrane segment at 210–233 (EPLVRGFTTAAAVHVSVSQLKYLL) threads the bilayer. Residues 234-244 (GVKTARFNGPL) lie on the Extracellular side of the membrane. Residues 245–256 (SVVYSLDAVLRN) constitute an intramembrane region (helical). At 257–261 (IADTN) the chain is on the extracellular side. Residues 262-285 (IVTLIIGLGCTVFLYIIKQLNERF) form a helical membrane-spanning segment. The Cytoplasmic portion of the chain corresponds to 286–294 (KKKLLIPIP). Residues 295–310 (GEIIVVIVSTGISYGM) traverse the membrane as a helical segment. Residues 311–335 (LMSENYGVDVVGKIPTGLLPPKVPD) lie on the Extracellular side of the membrane. The chain crosses the membrane as a helical span at residues 336–370 (FSVFPNLFADAVPIAVVGFSITISLAKTFALKYGY). The Cytoplasmic segment spans residues 371–373 (SVD). A helical transmembrane segment spans residues 374–391 (GNQELIALGLCNFVSSFF). At 392–399 (HTFVVTAS) the chain is on the extracellular side. A helical transmembrane segment spans residues 400 to 409 (MSRSLVQEST). Serine 401 is a binding site for salicylate. Residues 410-413 (GGHT) are Cytoplasmic-facing. Residues 414 to 435 (EIAGLLASLLVLLVVVAIGFVF) form a helical membrane-spanning segment. Residues 436–439 (QPLP) lie on the Extracellular side of the membrane. The chain crosses the membrane as a helical span at residues 440–467 (TTVLAAIIMVNLLGMFKQTRDIPVLWRK). Serine 468 is a topological domain (cytoplasmic). A helical transmembrane segment spans residues 469-484 (KIELAIWLVSFFASVL). Over 485–486 (LG) the chain is Extracellular. The helical transmembrane segment at 487–507 (LDYGLAVAMAFAILTVIYRTQ) threads the bilayer. Positions 508–731 (RPKNVVLGQI…AVLQCKRWRD (224 aa)) are extended region for STAS domain. Over 508–739 (RPKNVVLGQI…RDLPVHPNIH (232 aa)) the chain is Cytoplasmic. One can recognise an STAS domain in the interval 528–726 (EYEEAEECSG…PTIHDAVLQC (199 aa)).

Belongs to the SLC26A/SulP transporter (TC 2.A.53) family. In terms of assembly, homodimer. Interacts (via STAS domain) with CALM; this interaction is calcium-dependent. In terms of tissue distribution, expressed in hair cells of the auditory organs.

It localises to the cell membrane. The catalysed reaction is oxalate(in) + chloride(out) = oxalate(out) + chloride(in). It catalyses the reaction sulfate(out) + chloride(in) = sulfate(in) + chloride(out). Sulfate/chloride antiport activity is inhibited by salicylate; this inhibition is reversible. In terms of biological role, electrogenic antiporter that exchanges sulfate or oxalate for chloride ion in a strictly coupled manner with a 1:1 stoichiometry. Adopts a dynamic conformation, which alternates between the exposure of the central binding site to the extra- and intracellular solutions leading to an inward-to-outward conformational transition during the transport cycle. Generates voltage-dependent charge movements resembling to the non-linear capacitance (NLC) of the cell membrane, but which are not associated to electromotile activity. In Danio rerio (Zebrafish), this protein is Prestin.